We begin with the raw amino-acid sequence, 389 residues long: 26S proteasome non-ATPase regulatory subunit 6 (389 aa).

In terms of domain architecture, PCI spans 193–361 (DFKQAAELFL…EIVETNRPDS (169 aa)).

This sequence belongs to the proteasome subunit S10 family. In terms of assembly, component of the 19S proteasome regulatory particle complex. The 26S proteasome consists of a 20S core particle (CP) and two 19S regulatory subunits (RP). The regulatory particle is made of a lid composed of 9 subunits including PSMD6, a base containing 6 ATPases and few additional components.

Functionally, component of the 26S proteasome, a multiprotein complex involved in the ATP-dependent degradation of ubiquitinated proteins. This complex plays a key role in the maintenance of protein homeostasis by removing misfolded or damaged proteins, which could impair cellular functions, and by removing proteins whose functions are no longer required. Therefore, the proteasome participates in numerous cellular processes, including cell cycle progression, apoptosis, or DNA damage repair. The sequence is that of 26S proteasome non-ATPase regulatory subunit 6 (PSMD6) from Homo sapiens (Human).